Here is a 305-residue protein sequence, read N- to C-terminus: Lipoyl synthase (305 aa).

Cys-41, Cys-46, Cys-52, Cys-68, Cys-72, Cys-75, and Ser-281 together coordinate [4Fe-4S] cluster. The Radical SAM core domain occupies 54 to 270; that stretch reads GARRTATFMI…RKVAMDKGFK (217 aa). Residues 283-298 show a composition bias toward basic and acidic residues; sequence HADEQVNEAAKEKQRQ. Residues 283 to 305 form a disordered region; that stretch reads HADEQVNEAAKEKQRQGEAQLNS.

This sequence belongs to the radical SAM superfamily. Lipoyl synthase family. The cofactor is [4Fe-4S] cluster.

It is found in the cytoplasm. It catalyses the reaction [[Fe-S] cluster scaffold protein carrying a second [4Fe-4S](2+) cluster] + N(6)-octanoyl-L-lysyl-[protein] + 2 oxidized [2Fe-2S]-[ferredoxin] + 2 S-adenosyl-L-methionine + 4 H(+) = [[Fe-S] cluster scaffold protein] + N(6)-[(R)-dihydrolipoyl]-L-lysyl-[protein] + 4 Fe(3+) + 2 hydrogen sulfide + 2 5'-deoxyadenosine + 2 L-methionine + 2 reduced [2Fe-2S]-[ferredoxin]. It functions in the pathway protein modification; protein lipoylation via endogenous pathway; protein N(6)-(lipoyl)lysine from octanoyl-[acyl-carrier-protein]. Catalyzes the radical-mediated insertion of two sulfur atoms into the C-6 and C-8 positions of the octanoyl moiety bound to the lipoyl domains of lipoate-dependent enzymes, thereby converting the octanoylated domains into lipoylated derivatives. The protein is Lipoyl synthase of Staphylococcus aureus (strain bovine RF122 / ET3-1).